The sequence spans 432 residues: Cytoplasmic 60S subunit biogenesis factor REH1 (432 aa).

The C2H2-type 1 zinc finger occupies 6–30; that stretch reads FTCNCCVIQFKTSDLQRYHMKTEWH. Residues 79-150 form a disordered region; that stretch reads QSNALPQKQK…NTDYGEDTVS (72 aa). Residues 86–98 are compositionally biased toward basic residues; that stretch reads KQKKPIKSKRGRK. A compositionally biased stretch (basic and acidic residues) spans 105-117; it reads KRKDRDIAKEKQN. The span at 118–143 shows a compositional bias: polar residues; the sequence is RSVSPSGSISSQLSNLTVGTENTNTD. C2H2-type zinc fingers lie at residues 186–209 and 237–261; these read TECI…FSEH and HNCL…SKRH.

Belongs to the REI1 family. As to quaternary structure, associates with nascent pre-60S particles that have not yet entered the translating pool, and is released from mature 60S subunits. Interacts with pre-60S factors NMD3, LSG1, and TIF6.

The protein localises to the cytoplasm. Its function is as follows. Pre-60S-associated cytoplasmic factor involved in the cytoplasmic maturation of the 60S subunit. May act redundantly with REI1 to directly promote a stabilizing structural rearrangement in cytoplasmic 60S subunit maturation independent on the REI1-specific ARX1 recycling. The protein is Cytoplasmic 60S subunit biogenesis factor REH1 (REH1) of Saccharomyces cerevisiae (strain ATCC 204508 / S288c) (Baker's yeast).